We begin with the raw amino-acid sequence, 335 residues long: Selenide, water dikinase (335 aa).

The active site involves Sec7. Position 7 (Sec7) is a non-standard amino acid, selenocysteine. ATP is bound by residues Lys10 and 36 to 38 (LGD). Asp39 is a binding site for Mg(2+). Residues Asp55, Asp78, and 126–128 (GHT) contribute to the ATP site. Mg(2+) is bound at residue Asp78. Asp232 contributes to the Mg(2+) binding site.

The protein belongs to the selenophosphate synthase 1 family. Class I subfamily. Homodimer. Mg(2+) is required as a cofactor.

The enzyme catalyses hydrogenselenide + ATP + H2O = selenophosphate + AMP + phosphate + 2 H(+). In terms of biological role, synthesizes selenophosphate from selenide and ATP. The sequence is that of Selenide, water dikinase from Methanococcus maripaludis (strain DSM 14266 / JCM 13030 / NBRC 101832 / S2 / LL).